An 88-amino-acid polypeptide reads, in one-letter code: Putative septation protein SpoVG (88 aa).

The protein belongs to the SpoVG family.

Its function is as follows. Could be involved in septation. The sequence is that of Putative septation protein SpoVG from Caldicellulosiruptor saccharolyticus (strain ATCC 43494 / DSM 8903 / Tp8T 6331).